The chain runs to 249 residues: Small ribosomal subunit protein uS2 (249 aa).

The protein belongs to the universal ribosomal protein uS2 family.

This is Small ribosomal subunit protein uS2 from Polynucleobacter asymbioticus (strain DSM 18221 / CIP 109841 / QLW-P1DMWA-1) (Polynucleobacter necessarius subsp. asymbioticus).